Consider the following 265-residue polypeptide: Thymidine kinase 2, mitochondrial (265 aa).

Residues 1 to 33 constitute a mitochondrion transit peptide; sequence MLLRPLRGWAALALRCFEPGSPGSPASGPGSRR. The span at 21-31 shows a compositional bias: low complexity; it reads SPGSPASGPGS. Residues 21–45 form a disordered region; it reads SPGSPASGPGSRRVQRGAWPSDKER. 57 to 65 provides a ligand contact to ATP; it reads GNIASGKTT. Glu133 acts as the Proton acceptor in catalysis.

The protein belongs to the DCK/DGK family. In terms of assembly, homodimer.

The protein resides in the mitochondrion. It carries out the reaction thymidine + ATP = dTMP + ADP + H(+). The catalysed reaction is 2'-deoxycytidine + ATP = dCMP + ADP + H(+). The enzyme catalyses 2'-deoxyuridine + ATP = dUMP + ADP + H(+). Its function is as follows. Phosphorylates thymidine, deoxycytidine, and deoxyuridine in the mitochondrial matrix. In non-replicating cells, where cytosolic dNTP synthesis is down-regulated, mtDNA synthesis depends solely on TK2 and DGUOK. The polypeptide is Thymidine kinase 2, mitochondrial (TK2) (Macaca fascicularis (Crab-eating macaque)).